A 498-amino-acid polypeptide reads, in one-letter code: Heat stress transcription factor A-3 (498 aa).

Residues 156-180 (RRRSSPTQQSGLQPGSSGESGLDPE) are disordered. Residues 160-174 (SPTQQSGLQPGSSGE) show a composition bias toward polar residues. Positions 180–235 (ELNTLRREKSALLQEVTRLKQEHLQTIEQMSTLNQRLESAEDRQKQMVSFLAKLLQ) form a coiled coil. Residues 184-234 (LRREKSALLQEVTRLKQEHLQTIEQMSTLNQRLESAEDRQKQMVSFLAKLL) form a hydrophobic repeat HR-A/B region. The Nuclear localization signal signature appears at 258–263 (KRKFLK). Residues 263 to 291 (KHVPHGNIDSGESSSQHTGESNLDFSPTS) are disordered. Over residues 272-291 (SGESSSQHTGESNLDFSPTS) the composition is skewed to polar residues. Residues 309–316 (LEDGDLNL) carry the Nuclear export signal motif. Residues 356–382 (LEIPPASGPRGQDPTIGRSKGKNVLSP) form a disordered region.

It belongs to the HSF family. Class A subfamily. As to quaternary structure, homotrimer. Exhibits temperature-dependent phosphorylation.

The protein localises to the cytoplasm. It localises to the nucleus. Its function is as follows. Transcriptional regulator that specifically binds DNA of heat shock promoter elements (HSE). The sequence is that of Heat stress transcription factor A-3 (HSFA3) from Oryza sativa subsp. japonica (Rice).